Here is a 257-residue protein sequence, read N- to C-terminus: Dof zinc finger protein DOF5.3 (257 aa).

Positions 23 to 50 are disordered; it reads LSYSSNPTPLDNDQKKPSPATAVTRPQP. The span at 24 to 33 shows a compositional bias: polar residues; sequence SYSSNPTPLD. The Dof-type zinc finger occupies 55–109; the sequence is LRCPRCDSTNTKFCYYNNYSLTQPRYFCKSCRRYWTKGGTLRNIPVGGGCRKNKR. 4 residues coordinate Zn(2+): Cys-57, Cys-60, Cys-82, and Cys-85. Positions 104–127 are disordered; the sequence is CRKNKRSTSSAARSLRTTPEPASH. The segment covering 110-121 has biased composition (low complexity); the sequence is STSSAARSLRTT.

As to expression, the PEAR proteins (e.g. DOF2.4, DOF5.1, DOF3.2, DOF1.1, DOF5.6 and DOF5.3) form a short-range concentration gradient that peaks at protophloem sieve elements (PSE). Accumulates in the stele.

The protein localises to the nucleus. In terms of biological role, transcription factor that binds specifically to a 5'-AA[AG]G-3' consensus core sequence. The PEAR proteins (e.g. DOF2.4, DOF5.1, DOF3.2, DOF1.1, DOF5.6 and DOF5.3) activate gene expression that promotes radial growth of protophloem sieve elements. The polypeptide is Dof zinc finger protein DOF5.3 (Arabidopsis thaliana (Mouse-ear cress)).